A 225-amino-acid chain; its full sequence is Large ribosomal subunit protein bL25 (225 aa).

Positions 206–225 are disordered; sequence EDSKNKITKDNETNKDKSNL.

Belongs to the bacterial ribosomal protein bL25 family. CTC subfamily. Part of the 50S ribosomal subunit; part of the 5S rRNA/L5/L18/L25 subcomplex. Contacts the 5S rRNA. Binds to the 5S rRNA independently of L5 and L18.

Functionally, this is one of the proteins that binds to the 5S RNA in the ribosome where it forms part of the central protuberance. This chain is Large ribosomal subunit protein bL25, found in Vesicomyosocius okutanii subsp. Calyptogena okutanii (strain HA).